A 3420-amino-acid polypeptide reads, in one-letter code: Adhesin BmaC autotransporter (3420 aa).

Residues 1–72 (MPNLANQDFT…SLVMAGTAAA (72 aa)) form the signal peptide. Positions 3138-3420 (GPSGNNGIWA…AGSVGLRVRW (283 aa)) constitute an Autotransporter domain.

Its subcellular location is the cell surface. It localises to the cell outer membrane. Fibronectin-binding protein, which is involved in adhesion to host cells and in the infective process. Mediates the binding of B.suis to the extracellular matrix and to non-phagocytic cells via cell-associated fibronectin. The polypeptide is Adhesin BmaC autotransporter (Brucella suis biovar 1 (strain 1330)).